A 299-amino-acid chain; its full sequence is Mitochondrial 2-oxodicarboxylate carrier (299 aa).

Solcar repeat units lie at residues Arg11 to Leu100, Ser107 to Met196, and Leu205 to Trp294. Helical transmembrane passes span Ile17–Val37, Phe70–Val89, Ala113–Val133, Gly167–Phe187, Leu205–Asn225, and Leu277–Glu297.

Belongs to the mitochondrial carrier (TC 2.A.29) family. Expressed in placenta, gall bladder and colon.

The protein resides in the mitochondrion inner membrane. The enzyme catalyses 2-oxoadipate(in) + 2-oxoglutarate(out) = 2-oxoadipate(out) + 2-oxoglutarate(in). The catalysed reaction is hexanedioate(in) + 2-oxoglutarate(out) = hexanedioate(out) + 2-oxoglutarate(in). It catalyses the reaction L-2-aminoadipate(in) + 2-oxoglutarate(out) = L-2-aminoadipate(out) + 2-oxoglutarate(in). It carries out the reaction glutarate(in) + 2-oxoglutarate(out) = glutarate(out) + 2-oxoglutarate(in). The enzyme catalyses 2-oxoheptanedioate(in) + 2-oxoglutarate(out) = 2-oxoheptanedioate(out) + 2-oxoglutarate(in). The catalysed reaction is heptanedioate(in) + 2-oxoglutarate(out) = heptanedioate(out) + 2-oxoglutarate(in). It catalyses the reaction citrate(in) + 2-oxoglutarate(out) = citrate(out) + 2-oxoglutarate(in). Transports dicarboxylates across the inner membranes of mitochondria by a counter-exchange mechanism. Can transport 2-oxoadipate (2-oxohexanedioate), 2-oxoglutarate, adipate (hexanedioate), glutarate, and to a lesser extent, pimelate (heptanedioate), 2-oxopimelate (2-oxoheptanedioate), 2-aminoadipate (2-aminohexanedioate), oxaloacetate, and citrate. Plays a central role in catabolism of lysine, hydroxylysine, and tryptophan, by transporting common metabolite intermediates (such as 2-oxoadipate) into the mitochondria, where it is converted into acetyl-CoA and can enter the citric acid (TCA) cycle. This chain is Mitochondrial 2-oxodicarboxylate carrier (SLC25A21), found in Homo sapiens (Human).